We begin with the raw amino-acid sequence, 152 residues long: Synaptobrevin (152 aa).

Residues 1 to 16 are compositionally biased toward polar residues; it reads MENNEAPSPSGSNNND. The interval 1–30 is disordered; sequence MENNEAPSPSGSNNNDFPILPPPPNANDNY. Over 1–110 the chain is Cytoplasmic; that stretch reads MENNEAPSPS…KRKQWWANMK (110 aa). The region spanning 47–107 is the v-SNARE coiled-coil homology domain; sequence KLQQTQAKVD…GKLKRKQWWA (61 aa). A helical; Anchor for type IV membrane protein membrane pass occupies residues 111 to 130; it reads MMIILGVIAVVLLIIVLVSV. The Vesicular segment spans residues 131–152; that stretch reads WPSSSDSGSGGGNKAITQAPPH. The segment at 133-152 is disordered; it reads SSSDSGSGGGNKAITQAPPH.

The protein belongs to the synaptobrevin family. Part of the SNARE core complex containing Snap25 and syntaxin. Post-translationally, ubiquitinated by gzl, regulating endocytic trafficking. In wing imaginal disks, ubiquitination by gzl promotes transcytosis of wingless (wg) to the basolateral surface. In terms of tissue distribution, not nervous system-specific; abundant in cells of the gut and Malpighian tubules.

It localises to the cytoplasmic vesicle. It is found in the secretory vesicle. The protein resides in the synaptic vesicle membrane. The protein localises to the cell membrane. Functionally, involved in the targeting and/or fusion of transport vesicles to their target membrane. The polypeptide is Synaptobrevin (Drosophila melanogaster (Fruit fly)).